Consider the following 169-residue polypeptide: Succinate dehydrogenase cytochrome b560 subunit, mitochondrial (169 aa).

The transit peptide at 1 to 29 (MAAFLLRHVSRHCLRAHLNAQLCIRNAAP) directs the protein to the mitochondrion. At 30–62 (LGTTAKEEMERFWKKNTSSNRPLSPHLTIYKWS) the chain is on the mitochondrial matrix side. A helical transmembrane segment spans residues 63–92 (LPMALSVCHRGSGIALSGGVSLFGLSALLL). Residues 93-112 (PGNFESYLMFVKSLCLGPTL) are Mitochondrial intermembrane-facing. The chain crosses the membrane as a helical span at residues 113 to 137 (IYSAKFVLVFPLMYHSLNGIRHLLW). H127 serves as a coordination point for heme b. The Mitochondrial matrix portion of the chain corresponds to 138–144 (DLGKGLA). A helical membrane pass occupies residues 145–166 (IPQVWLSGVAVVVLAVLSSGGL). Over 167–169 (AAL) the chain is Mitochondrial intermembrane.

It belongs to the cytochrome b560 family. As to quaternary structure, component of complex II composed of four subunits: the flavoprotein (FP) SDHA, iron-sulfur protein (IP) SDHB, and a cytochrome b560 composed of SDHC and SDHD. The cofactor is heme b.

The protein resides in the mitochondrion inner membrane. Its pathway is carbohydrate metabolism; tricarboxylic acid cycle. Membrane-anchoring subunit of succinate dehydrogenase (SDH) that is involved in complex II of the mitochondrial electron transport chain and is responsible for transferring electrons from succinate to ubiquinone (coenzyme Q). SDH also oxidizes malate to the non-canonical enol form of oxaloacetate, enol-oxaloacetate. Enol-oxaloacetate, which is a potent inhibitor of the succinate dehydrogenase activity, is further isomerized into keto-oxaloacetate. This chain is Succinate dehydrogenase cytochrome b560 subunit, mitochondrial (Sdhc), found in Mus musculus (Mouse).